Consider the following 101-residue polypeptide: NADH-quinone oxidoreductase subunit K (101 aa).

3 helical membrane passes run 4-24 (LADY…GIFI), 30-50 (LVLL…FIAF), and 61-81 (VFVF…LAIV).

It belongs to the complex I subunit 4L family. As to quaternary structure, NDH-1 is composed of 14 different subunits. Subunits NuoA, H, J, K, L, M, N constitute the membrane sector of the complex.

Its subcellular location is the cell inner membrane. It catalyses the reaction a quinone + NADH + 5 H(+)(in) = a quinol + NAD(+) + 4 H(+)(out). NDH-1 shuttles electrons from NADH, via FMN and iron-sulfur (Fe-S) centers, to quinones in the respiratory chain. The immediate electron acceptor for the enzyme in this species is believed to be ubiquinone. Couples the redox reaction to proton translocation (for every two electrons transferred, four hydrogen ions are translocated across the cytoplasmic membrane), and thus conserves the redox energy in a proton gradient. The sequence is that of NADH-quinone oxidoreductase subunit K from Alkalilimnicola ehrlichii (strain ATCC BAA-1101 / DSM 17681 / MLHE-1).